The primary structure comprises 251 residues: Small ribosomal subunit protein uS2 (251 aa).

Belongs to the universal ribosomal protein uS2 family.

This Azoarcus sp. (strain BH72) protein is Small ribosomal subunit protein uS2.